The following is a 109-amino-acid chain: Large ribosomal subunit protein P1C (109 aa).

Over residues 68-83 (ASAPTAAGAGAAAPAE) the composition is skewed to low complexity. A disordered region spans residues 68 to 109 (ASAPTAAGAGAAAPAEAAEEEKKEEAKEEEESDEDMGFGLFD). Residues 94–103 (KEEEESDEDM) show a composition bias toward acidic residues. Ser99 is modified (phosphoserine).

The protein belongs to the eukaryotic ribosomal protein P1/P2 family. Component of the large ribosomal subunit (LSU). Mature yeast ribosomes consist of a small (40S) and a large (60S) subunit. The 40S small subunit contains 1 molecule of ribosomal RNA (18S rRNA) and at least 33 different proteins. The large 60S subunit contains 3 rRNA molecules (25S, 5.8S and 5S rRNA) and at least 46 different proteins. The acidic ribosomal P-proteins form the stalk structure of the 60S subunit. They are organized as a pentameric complex in which uL10/P0 interacts with 2 heterodimers of P1 and P2 proteins.

Its subcellular location is the cytoplasm. Its function is as follows. Component of the ribosome, a large ribonucleoprotein complex responsible for the synthesis of proteins in the cell. The small ribosomal subunit (SSU) binds messenger RNAs (mRNAs) and translates the encoded message by selecting cognate aminoacyl-transfer RNA (tRNA) molecules. The large subunit (LSU) contains the ribosomal catalytic site termed the peptidyl transferase center (PTC), which catalyzes the formation of peptide bonds, thereby polymerizing the amino acids delivered by tRNAs into a polypeptide chain. The nascent polypeptides leave the ribosome through a tunnel in the LSU and interact with protein factors that function in enzymatic processing, targeting, and the membrane insertion of nascent chains at the exit of the ribosomal tunnel. This Schizosaccharomyces pombe (strain 972 / ATCC 24843) (Fission yeast) protein is Large ribosomal subunit protein P1C (rpp103).